The following is a 227-amino-acid chain: Bone marrow proteoglycan (227 aa).

The signal sequence occupies residues 1 to 16 (MKFPLLLALLVGGAFA). Residues 17–110 (LHLSSEASDS…TSLMGDSGFK (94 aa)) constitute a propeptide, acidic. The interval 21 to 105 (SEASDSKSPL…KEEDTTSLMG (85 aa)) is disordered. O-linked (GalNAc...) serine glycosylation is present at Ser24. The span at 34–46 (SLPREAEISRPEV) shows a compositional bias: basic and acidic residues. The segment covering 58-70 (LEEEEEEEEEEGS) has biased composition (acidic residues). An O-linked (Xyl...) (chondroitin sulfate) serine glycan is attached at Ser70. The C-type lectin domain maps to 128-227 (LVCRSCYRGT…GKRRPFICAY (100 aa)). Disulfide bonds link Cys130–Cys225 and Cys202–Cys217.

Nitrated.

It is found in the secreted. In terms of biological role, cytotoxin and helminthotoxin. MBP also induces non-cytolytic histamine release from basophils. It is involved in antiparasitic defense mechanisms and immune hypersensitivity reactions. This Rattus norvegicus (Rat) protein is Bone marrow proteoglycan (Prg2).